A 201-amino-acid chain; its full sequence is Anthranilate synthase component 2 (201 aa).

Residues 3–196 (NILFIDNFDS…IDWALSSTPA (194 aa)) form the Glutamine amidotransferase type-1 domain. 57–59 (GPG) serves as a coordination point for L-glutamine. Residue cysteine 84 is the Nucleophile; for GATase activity of the active site. L-glutamine is bound by residues glutamine 88 and 134-135 (SL). Residues histidine 170 and glutamate 172 each act as for GATase activity in the active site.

In terms of assembly, heterotetramer consisting of two non-identical subunits: a beta subunit (TrpG) and a large alpha subunit (TrpE).

It catalyses the reaction chorismate + L-glutamine = anthranilate + pyruvate + L-glutamate + H(+). Its pathway is amino-acid biosynthesis; L-tryptophan biosynthesis; L-tryptophan from chorismate: step 1/5. Part of a heterotetrameric complex that catalyzes the two-step biosynthesis of anthranilate, an intermediate in the biosynthesis of L-tryptophan. In the first step, the glutamine-binding beta subunit (TrpG) of anthranilate synthase (AS) provides the glutamine amidotransferase activity which generates ammonia as a substrate that, along with chorismate, is used in the second step, catalyzed by the large alpha subunit of AS (TrpE) to produce anthranilate. In the absence of TrpG, TrpE can synthesize anthranilate directly from chorismate and high concentrations of ammonia. The sequence is that of Anthranilate synthase component 2 (trpG) from Vibrio cholerae serotype O1 (strain ATCC 39315 / El Tor Inaba N16961).